The chain runs to 202 residues: Small ribosomal subunit protein uS4 (202 aa).

Residues 15–42 (LGDLPGLTRKAAKRSYPPGQHGQARRKR) form a disordered region. The S4 RNA-binding domain occupies 90–152 (NRLDNVCFRL…KCSKQLAEGN (63 aa)).

This sequence belongs to the universal ribosomal protein uS4 family. In terms of assembly, part of the 30S ribosomal subunit. Contacts protein S5. The interaction surface between S4 and S5 is involved in control of translational fidelity.

One of the primary rRNA binding proteins, it binds directly to 16S rRNA where it nucleates assembly of the body of the 30S subunit. In terms of biological role, with S5 and S12 plays an important role in translational accuracy. The sequence is that of Small ribosomal subunit protein uS4 from Parasynechococcus marenigrum (strain WH8102).